Consider the following 356-residue polypeptide: Tyrosine recombinase XerS (356 aa).

Residues 16 to 121 (VMPWYVLDYY…ALSSLYKYLT (106 aa)) form the Core-binding (CB) domain. The region spanning 169-354 (AFLDYVDKEY…VNDEQKNALD (186 aa)) is the Tyr recombinase domain. Residues arginine 210, lysine 234, histidine 306, arginine 309, and histidine 332 contribute to the active site. Tyrosine 341 functions as the O-(3'-phospho-DNA)-tyrosine intermediate in the catalytic mechanism.

This sequence belongs to the 'phage' integrase family. XerS subfamily.

The protein resides in the cytoplasm. FtsK is required for recombination. Site-specific tyrosine recombinase, which acts by catalyzing the cutting and rejoining of the recombining DNA molecules. Essential to convert dimers of the bacterial chromosome into monomers to permit their segregation at cell division. The polypeptide is Tyrosine recombinase XerS (Streptococcus pyogenes serotype M28 (strain MGAS6180)).